The primary structure comprises 509 residues: Glycogen synthase (509 aa).

Lys-47 lines the ADP-alpha-D-glucose pocket.

This sequence belongs to the glycosyltransferase 1 family. Bacterial/plant glycogen synthase subfamily.

It carries out the reaction [(1-&gt;4)-alpha-D-glucosyl](n) + ADP-alpha-D-glucose = [(1-&gt;4)-alpha-D-glucosyl](n+1) + ADP + H(+). It participates in glycan biosynthesis; glycogen biosynthesis. Its function is as follows. Synthesizes alpha-1,4-glucan chains using ADP-glucose. This is Glycogen synthase from Xanthomonas euvesicatoria pv. vesicatoria (strain 85-10) (Xanthomonas campestris pv. vesicatoria).